The chain runs to 337 residues: tRNA N6-adenosine threonylcarbamoyltransferase (337 aa).

The Fe cation site is built by His111 and His115. Residues Leu134 to Gly138, Asp167, Gly180, and Asn272 contribute to the substrate site. Asp300 provides a ligand contact to Fe cation.

This sequence belongs to the KAE1 / TsaD family. It depends on Fe(2+) as a cofactor.

The protein resides in the cytoplasm. The enzyme catalyses L-threonylcarbamoyladenylate + adenosine(37) in tRNA = N(6)-L-threonylcarbamoyladenosine(37) in tRNA + AMP + H(+). Functionally, required for the formation of a threonylcarbamoyl group on adenosine at position 37 (t(6)A37) in tRNAs that read codons beginning with adenine. Is involved in the transfer of the threonylcarbamoyl moiety of threonylcarbamoyl-AMP (TC-AMP) to the N6 group of A37, together with TsaE and TsaB. TsaD likely plays a direct catalytic role in this reaction. This Pectobacterium atrosepticum (strain SCRI 1043 / ATCC BAA-672) (Erwinia carotovora subsp. atroseptica) protein is tRNA N6-adenosine threonylcarbamoyltransferase.